Here is a 217-residue protein sequence, read N- to C-terminus: MLSLHKTLEMPSADTALPGRAAPIPTAQTHFVNGHALKGPYPEGLETAIVAMGCFWGVERVFWKVPGVYVTAAGYAAGITPNPTYEEVCTGRTGHTEVVLVVFDPKVVTYEALLKTFWENHDPTQGMRQGNDIGTQYRSGLYVTSDAQAAAAAESKAAYQQALSARGLGTITTEIAPAGPFYFAEDYHQQYLAKNPNGYCGIGGTGVVCPIGLGVEG.

Residue Cys54 is part of the active site.

It belongs to the MsrA Met sulfoxide reductase family.

It catalyses the reaction L-methionyl-[protein] + [thioredoxin]-disulfide + H2O = L-methionyl-(S)-S-oxide-[protein] + [thioredoxin]-dithiol. It carries out the reaction [thioredoxin]-disulfide + L-methionine + H2O = L-methionine (S)-S-oxide + [thioredoxin]-dithiol. In terms of biological role, has an important function as a repair enzyme for proteins that have been inactivated by oxidation. Catalyzes the reversible oxidation-reduction of methionine sulfoxide in proteins to methionine. The protein is Peptide methionine sulfoxide reductase MsrA 1 (msrA1) of Caulobacter vibrioides (strain ATCC 19089 / CIP 103742 / CB 15) (Caulobacter crescentus).